The sequence spans 37 residues: Mau operon transcriptional activator (37 aa).

It belongs to the LysR transcriptional regulatory family.

Functionally, transcriptional activator of the mau genes involved in methylamine metabolism. This Paracoccus versutus (Thiobacillus versutus) protein is Mau operon transcriptional activator (mauR).